The following is a 214-amino-acid chain: Cytochrome c biogenesis ATP-binding export protein CcmA (214 aa).

Positions 8 to 212 (LYAADLACLK…PPTVLDLSEV (205 aa)) constitute an ABC transporter domain. 40 to 47 (GPNGFGKT) is a binding site for ATP.

The protein belongs to the ABC transporter superfamily. CcmA exporter (TC 3.A.1.107) family. In terms of assembly, the complex is composed of two ATP-binding proteins (CcmA) and two transmembrane proteins (CcmB).

It localises to the cell inner membrane. It catalyses the reaction heme b(in) + ATP + H2O = heme b(out) + ADP + phosphate + H(+). Functionally, part of the ABC transporter complex CcmAB involved in the biogenesis of c-type cytochromes; once thought to export heme, this seems not to be the case, but its exact role is uncertain. Responsible for energy coupling to the transport system. In Aromatoleum aromaticum (strain DSM 19018 / LMG 30748 / EbN1) (Azoarcus sp. (strain EbN1)), this protein is Cytochrome c biogenesis ATP-binding export protein CcmA.